The primary structure comprises 395 residues: uncharacterized protein (395 aa).

Disordered regions lie at residues 17–155 (EVKK…QVKT) and 276–304 (EERE…HEQK). 2 stretches are compositionally biased toward polar residues: residues 42 to 71 (DGNN…SNVV) and 81 to 96 (GDAS…NVVK). Basic and acidic residues predominate over residues 103–133 (VAEKPEKEDLAVIESEDKAAKPDGEIKKNVE). A compositionally biased stretch (low complexity) spans 134–143 (TEVTSRSTSS). Basic and acidic residues-rich tracts occupy residues 144–155 (QEKDELEKQVKT) and 276–290 (EERE…KEQS). The stretch at 224 to 351 (LKMNGKEDDL…QRRLKELEAM (128 aa)) forms a coiled coil. A compositionally biased stretch (polar residues) spans 291–300 (SEGSKTANQT).

The protein localises to the cytoplasm. This is an uncharacterized protein from Schizosaccharomyces pombe (strain 972 / ATCC 24843) (Fission yeast).